The following is a 752-amino-acid chain: Phosphatidylinositol 4-phosphate 5-kinase 1 (752 aa).

MORN repeat units follow at residues 81-103, 104-126, 127-149, 150-172, 173-195, 196-218, and 219-241; these read YIGSFSGGFPHGSGKYLWKDGCM, YEGDWKRGKASGKGKFSWPSGAT, YEGEFKSGRMEGFGTFTGADGDT, YRGTWVADRKHGHGQKRYANGDF, YEGTWRRNLQDGRGRYVWRNGNQ, YTGEWRSGVISGKGLLVWPNGNR, and YEGLWENGIPKGNGVFTWSDGSS. The region spanning 349 to 748 is the PIPK domain; it reads SKGHKKYDLM…RFRDFISRIF (400 aa). The segment at 708–729 is activation loop; the sequence is YDITKKIEHAYKSLQADPASIS.

Phosphorylation inactivates the enzyme. As to expression, expressed in the whole plant, preferentially in roots. Strongly expressed in meristematic tissues, namely procambial cell layers.

The catalysed reaction is a 1,2-diacyl-sn-glycero-3-phospho-(1D-myo-inositol 4-phosphate) + ATP = a 1,2-diacyl-sn-glycero-3-phospho-(1D-myo-inositol-4,5-bisphosphate) + ADP + H(+). Catalyzes the synthesis of phosphatidylinositol 4,5-bisphosphate and phosphatidylinositol 3,4-bisphosphate. In Arabidopsis thaliana (Mouse-ear cress), this protein is Phosphatidylinositol 4-phosphate 5-kinase 1 (PIP5K1).